Here is a 400-residue protein sequence, read N- to C-terminus: Aminomethyltransferase, mitochondrial (400 aa).

Residues Glu-221, Arg-250, and Tyr-397 each coordinate substrate.

The protein belongs to the GcvT family. Component of the glycine decarboxylase complex (GDC), which is composed of four proteins: P, T, L and H.

Its subcellular location is the mitochondrion. The enzyme catalyses N(6)-[(R)-S(8)-aminomethyldihydrolipoyl]-L-lysyl-[protein] + (6S)-5,6,7,8-tetrahydrofolate = N(6)-[(R)-dihydrolipoyl]-L-lysyl-[protein] + (6R)-5,10-methylene-5,6,7,8-tetrahydrofolate + NH4(+). Its function is as follows. The glycine cleavage system (glycine decarboxylase complex) catalyzes the degradation of glycine. The polypeptide is Aminomethyltransferase, mitochondrial (GCV1) (Saccharomyces cerevisiae (strain ATCC 204508 / S288c) (Baker's yeast)).